The following is a 1459-amino-acid chain: Endogenous retrovirus group K member 7 Pol protein (1459 aa).

One can recognise a Reverse transcriptase domain in the interval 57–245 (LEKGHIEPSF…TPFHYLGMQI (189 aa)). The LPQG signature appears at 161–164 (LPQG). The YXDD motif lies at 195-198 (YIDD). The 131-residue stretch at 460-590 (LENALTVFTD…ADLLVSSALI (131 aa)) folds into the RNase H type-1 domain. Residues Asp-469, Glu-497, Asp-517, and Asp-582 each coordinate Mg(2+). An Integrase-type zinc finger spans residues 587–628 (SALIKAQELHALTHVNAAGLKNKFDVTWKQAKDIVQHCTQCQ). Residues His-596, His-600, Cys-624, and Cys-627 each coordinate Zn(2+). The Integrase catalytic domain maps to 642 to 803 (RGLCPNALWQ…TSAEQHLTGK (162 aa)). The segment at residues 811–859 (KLIWWKDNKNKTWEIGKVITWGRGFACVSPGENQLPVWIPTRHLKFYNE) is a DNA-binding region (integrase-type).

It belongs to the beta type-B retroviral polymerase family. HERV class-II K(HML-2) pol subfamily.

The enzyme catalyses DNA(n) + a 2'-deoxyribonucleoside 5'-triphosphate = DNA(n+1) + diphosphate. It catalyses the reaction Endonucleolytic cleavage to 5'-phosphomonoester.. Early post-infection, the reverse transcriptase converts the viral RNA genome into double-stranded viral DNA. The RNase H domain of the reverse transcriptase performs two functions. It degrades the RNA template and specifically removes the RNA primer from the RNA/DNA hybrid. Following nuclear import, the integrase catalyzes the insertion of the linear, double-stranded viral DNA into the host cell chromosome. Endogenous Pol proteins may have kept, lost or modified their original function during evolution. This is Endogenous retrovirus group K member 7 Pol protein (ERVK-7) from Homo sapiens (Human).